The primary structure comprises 98 residues: NADH-ubiquinone oxidoreductase chain 4L (98 aa).

The next 3 membrane-spanning stretches (helical) occupy residues 1–21 (MMSI…GVLI), 28–48 (STLL…ALLI), and 59–79 (APLV…ALLV).

This sequence belongs to the complex I subunit 4L family. In terms of assembly, core subunit of respiratory chain NADH dehydrogenase (Complex I) which is composed of 45 different subunits.

It is found in the mitochondrion inner membrane. The enzyme catalyses a ubiquinone + NADH + 5 H(+)(in) = a ubiquinol + NAD(+) + 4 H(+)(out). In terms of biological role, core subunit of the mitochondrial membrane respiratory chain NADH dehydrogenase (Complex I) which catalyzes electron transfer from NADH through the respiratory chain, using ubiquinone as an electron acceptor. Part of the enzyme membrane arm which is embedded in the lipid bilayer and involved in proton translocation. The protein is NADH-ubiquinone oxidoreductase chain 4L (MT-ND4L) of Pseudocheirus peregrinus (Common ring-tailed possum).